The primary structure comprises 212 residues: Ras-related protein RABC1 (212 aa).

Gly-2 carries the N-acetylglycine modification. Position 20 to 27 (20 to 27 (GDSGVGKS)) interacts with GTP. The Effector region motif lies at 41 to 49 (LSPTIGVDF). GTP contacts are provided by residues 67–71 (DTAGQ), 127–130 (NKVD), and 157–158 (SA). Residues 182 to 212 (TAEGSSGGKKNIFKQNPAQTTSTSSSYCCSS) are disordered. Residues 201–212 (TTSTSSSYCCSS) show a composition bias toward low complexity. S-geranylgeranyl cysteine attachment occurs at residues Cys-209 and Cys-210.

Belongs to the small GTPase superfamily. Rab family.

Its subcellular location is the cell membrane. In terms of biological role, intracellular vesicle trafficking and protein transport. This chain is Ras-related protein RABC1 (RABC1), found in Arabidopsis thaliana (Mouse-ear cress).